The sequence spans 290 residues: MAAAVVGVSLRRGVPARFLRAGLRPVRGLEAVHGICRGAQTAAAATSRIKKFSIYRWDPDKPGDKPRMQTYEVDLNKCGPMVLDALIKIKNELDSTLTFRRSCREGICGSCAMNIAGGNTLACTKKIDPDLSKTTKIYPLPHMYVVKDLVPDLSNFYAQYKSIEPYLKKKDESKQGKEQYLQSIEDRQKLDGLYECILCACCSTSCPSYWWNGDKYLGPAVLMQAYRWMIDSRDDYTEERLAQLQDPFSLYRCHTIMNCTRTCPKGLNPGKAIAEIKKMMATYKEKAAAA.

The N-terminal 38 residues, 1–38, are a transit peptide targeting the mitochondrion; it reads MAAAVVGVSLRRGVPARFLRAGLRPVRGLEAVHGICRG. Positions 50–143 constitute a 2Fe-2S ferredoxin-type domain; sequence KKFSIYRWDP…TTKIYPLPHM (94 aa). Residues C103, C108, C111, and C123 each contribute to the [2Fe-2S] cluster site. The 4Fe-4S ferredoxin-type domain maps to 186 to 216; the sequence is DRQKLDGLYECILCACCSTSCPSYWWNGDKY. [4Fe-4S] cluster is bound by residues C196, C199, and C202. C206 serves as a coordination point for [3Fe-4S] cluster. W211 is an a ubiquinone binding site. Residues C253 and C259 each contribute to the [3Fe-4S] cluster site. C263 contributes to the [4Fe-4S] cluster binding site.

It belongs to the succinate dehydrogenase/fumarate reductase iron-sulfur protein family. In terms of assembly, component of complex II composed of four subunits: the flavoprotein (FP) SDHA, iron-sulfur protein (IP) SDHB, and a cytochrome b560 composed of SDHC and SDHD. The cofactor is [2Fe-2S] cluster. [3Fe-4S] cluster is required as a cofactor. Requires [4Fe-4S] cluster as cofactor.

Its subcellular location is the mitochondrion inner membrane. The enzyme catalyses a quinone + succinate = fumarate + a quinol. It catalyses the reaction (R)-malate + a quinone = enol-oxaloacetate + a quinol. It carries out the reaction (S)-malate + a quinone = enol-oxaloacetate + a quinol. It participates in carbohydrate metabolism; tricarboxylic acid cycle; fumarate from succinate (eukaryal route): step 1/1. Its activity is regulated as follows. Enol-oxaloacetate inhibits the succinate dehydrogenase activity. Iron-sulfur protein (IP) subunit of the succinate dehydrogenase complex (mitochondrial respiratory chain complex II), responsible for transferring electrons from succinate to ubiquinone (coenzyme Q). SDH also oxidizes malate to the non-canonical enol form of oxaloacetate, enol-oxaloacetate. Enol-oxaloacetate, which is a potent inhibitor of the succinate dehydrogenase activity, is further isomerized into keto-oxaloacetate. The polypeptide is Succinate dehydrogenase [ubiquinone] iron-sulfur subunit, mitochondrial (SDHB) (Gallus gallus (Chicken)).